Here is a 684-residue protein sequence, read N- to C-terminus: Poly(A) RNA polymerase cid14 (684 aa).

Disordered stretches follow at residues methionine 1–aspartate 52, aspartate 64–glutamate 127, and tryptophan 161–glutamate 219. Basic and acidic residues-rich tracts occupy residues glutamate 19–serine 35, glycine 73–glycine 91, aspartate 108–glutamate 127, serine 171–lysine 186, and phenylalanine 199–asparagine 210. Residues aspartate 298 and aspartate 300 each coordinate Mg(2+). ATP-binding residues include glycine 364, lysine 389, serine 407, tyrosine 408, asparagine 492, and lysine 496. Positions asparagine 434–asparagine 492 constitute a PAP-associated domain. A disordered region spans residues glycine 623 to phenylalanine 684. The span at glutamine 628–serine 655 shows a compositional bias: polar residues. The segment covering aspartate 656 to aspartate 672 has biased composition (acidic residues).

The protein belongs to the DNA polymerase type-B-like family. In terms of assembly, heterooligomer. Component of the TRAMP complex composed of at least cid14, mtr4, and air1. The cofactor is Mg(2+). Requires Mn(2+) as cofactor.

Its subcellular location is the nucleus. It is found in the nucleolus. It catalyses the reaction RNA(n) + ATP = RNA(n)-3'-adenine ribonucleotide + diphosphate. Functionally, required for 3' polyadenylation of the 5.8S and 25S rRNAs as a prelude to their degradation in the exosome. Involved in the nucleolar organization to ensure faithful chromosome segregation during mitosis. The polypeptide is Poly(A) RNA polymerase cid14 (cid14) (Schizosaccharomyces pombe (strain 972 / ATCC 24843) (Fission yeast)).